A 453-amino-acid polypeptide reads, in one-letter code: UDP-glycosyltransferase 79B6 (453 aa).

UDP-alpha-D-glucose-binding positions include S266, 325-327, 342-350, and 364-367; these read VQQ, HCGFGSMWE, and LGEQ.

The protein belongs to the UDP-glycosyltransferase family.

This is UDP-glycosyltransferase 79B6 (UGT79B6) from Arabidopsis thaliana (Mouse-ear cress).